Reading from the N-terminus, the 138-residue chain is Protein FAM136A (138 aa).

N-acetylalanine is present on Ala2. Phosphothreonine is present on residues Thr124 and Thr126.

Belongs to the FAM136 family.

The polypeptide is Protein FAM136A (Fam136a) (Rattus norvegicus (Rat)).